The following is a 1333-amino-acid chain: Protein CLASP-1 (1333 aa).

Residues 168–206 (LIPQLCRLTNDPNSEVRDASTNCLVDLMVFGGKSIIAKI) form an HEAT 1 repeat. The span at 269 to 305 (STTSFTSSARLSTPPRTNAPSLSPSPSTPSPLSLPAA) shows a compositional bias: low complexity. Residues 269-311 (STTSFTSSARLSTPPRTNAPSLSPSPSTPSPLSLPAANGRSRD) form a disordered region. Positions 360 to 389 (SNSDVREKLETANSVLRNANEDWSKRANQL) form a coiled coil. Disordered stretches follow at residues 579–711 (QKML…HQTP) and 764–792 (TPPK…NSSN). Residues 601 to 611 (NQKQPQQPQQN) are compositionally biased toward low complexity. Positions 612 to 644 (ISQKFLSQRSASALDNKSQVLSIAKPQQSNPSR) are enriched in polar residues. 2 stretches are compositionally biased toward low complexity: residues 657-669 (SSTS…VRSS) and 686-707 (TNFN…STST). Residues 1266–1304 (VAPCFVSAYDSTSSSVRKCAVFGLVALVQRVGMPRLETH) form an HEAT 2 repeat.

It belongs to the CLASP family.

The protein localises to the cytoplasm. It is found in the cytoskeleton. Functionally, microtubule plus-end tracking protein that promotes the stabilization of dynamic microtubules. This is Protein CLASP-1 from Caenorhabditis briggsae.